Here is a 638-residue protein sequence, read N- to C-terminus: Chaperone protein DnaK (638 aa).

T200 bears the Phosphothreonine; by autocatalysis mark. Residues 598–621 (SLHMAATAEQQSGSTGAGAGASAK) are disordered.

It belongs to the heat shock protein 70 family.

Acts as a chaperone. The sequence is that of Chaperone protein DnaK from Xylella fastidiosa (strain M23).